The primary structure comprises 528 residues: Aspartic proteinase-like protein 1 (528 aa).

An N-terminal signal peptide occupies residues 1-22; it reads MVSRSAFLLFCVLFLATEETLA. In terms of domain architecture, Peptidase A1 spans 100-449; it reads HYTWIDIGTP…DRENMKLGWS (350 aa). Residue Asp-118 is part of the active site. Asn-193 and Asn-217 each carry an N-linked (GlcNAc...) asparagine glycan. Asp-333 is an active-site residue. 2 N-linked (GlcNAc...) asparagine glycosylation sites follow: Asn-358 and Asn-391. The interval 451–503 is disordered; the sequence is SKCQEDKIEPPQASPGSTSSPNPLPTDEQQSRGGHAVSPAIAGKTPSKTPSSS. Polar residues predominate over residues 464–482; it reads SPGSTSSPNPLPTDEQQSR. The span at 494-503 shows a compositional bias: low complexity; it reads KTPSKTPSSS. Ser-503 is lipidated: GPI-anchor amidated serine. The propeptide at 504-528 is removed in mature form; that stretch reads SSYSFSSIMRLFNSLLLLHWLASLM.

It belongs to the peptidase A1 family.

It is found in the cell membrane. The chain is Aspartic proteinase-like protein 1 from Arabidopsis thaliana (Mouse-ear cress).